The primary structure comprises 223 residues: DNA mismatch repair protein MutH (223 aa).

Belongs to the MutH family.

Its subcellular location is the cytoplasm. Sequence-specific endonuclease that cleaves unmethylated GATC sequences. It is involved in DNA mismatch repair. The chain is DNA mismatch repair protein MutH from Shewanella sp. (strain MR-4).